The primary structure comprises 94 residues: ATP synthase F(0) complex subunit f, mitochondrial (94 aa).

Residue alanine 2 is modified to N-acetylalanine. Serine 3 carries the post-translational modification Phosphoserine. Lysine 22 is subject to N6-acetyllysine. The chain crosses the membrane as a helical span at residues 68 to 85; sequence MVLACYVLFSYSFSYKHL.

This sequence belongs to the ATPase F chain family. In terms of assembly, component of the ATP synthase complex composed at least of ATP5F1A/subunit alpha, ATP5F1B/subunit beta, ATP5MC1/subunit c (homooctomer), MT-ATP6/subunit a, MT-ATP8/subunit 8, ATP5ME/subunit e, ATP5MF/subunit f, ATP5MG/subunit g, ATP5MK/subunit k, ATP5MJ/subunit j, ATP5F1C/subunit gamma, ATP5F1D/subunit delta, ATP5F1E/subunit epsilon, ATP5PF/subunit F6, ATP5PB/subunit b, ATP5PD/subunit d, ATP5PO/subunit OSCP. ATP synthase complex consists of a soluble F(1) head domain (subunits alpha(3) and beta(3)) - the catalytic core - and a membrane F(0) domain - the membrane proton channel (subunits c, a, 8, e, f, g, k and j). These two domains are linked by a central stalk (subunits gamma, delta, and epsilon) rotating inside the F1 region and a stationary peripheral stalk (subunits F6, b, d, and OSCP).

It localises to the mitochondrion. It is found in the mitochondrion inner membrane. In terms of biological role, subunit f, of the mitochondrial membrane ATP synthase complex (F(1)F(0) ATP synthase or Complex V) that produces ATP from ADP in the presence of a proton gradient across the membrane which is generated by electron transport complexes of the respiratory chain. ATP synthase complex consist of a soluble F(1) head domain - the catalytic core - and a membrane F(1) domain - the membrane proton channel. These two domains are linked by a central stalk rotating inside the F(1) region and a stationary peripheral stalk. During catalysis, ATP synthesis in the catalytic domain of F(1) is coupled via a rotary mechanism of the central stalk subunits to proton translocation. In vivo, can only synthesize ATP although its ATP hydrolase activity can be activated artificially in vitro. Part of the complex F(0) domain. This chain is ATP synthase F(0) complex subunit f, mitochondrial, found in Homo sapiens (Human).